Reading from the N-terminus, the 422-residue chain is Light-independent protochlorophyllide reductase subunit N (422 aa).

[4Fe-4S] cluster-binding residues include C26, C51, and C112.

Belongs to the BchN/ChlN family. In terms of assembly, protochlorophyllide reductase is composed of three subunits; BchL, BchN and BchB. Forms a heterotetramer of two BchB and two BchN subunits. [4Fe-4S] cluster serves as cofactor.

It carries out the reaction chlorophyllide a + oxidized 2[4Fe-4S]-[ferredoxin] + 2 ADP + 2 phosphate = protochlorophyllide a + reduced 2[4Fe-4S]-[ferredoxin] + 2 ATP + 2 H2O. It participates in porphyrin-containing compound metabolism; bacteriochlorophyll biosynthesis (light-independent). Its function is as follows. Component of the dark-operative protochlorophyllide reductase (DPOR) that uses Mg-ATP and reduced ferredoxin to reduce ring D of protochlorophyllide (Pchlide) to form chlorophyllide a (Chlide). This reaction is light-independent. The NB-protein (BchN-BchB) is the catalytic component of the complex. This Acidiphilium rubrum protein is Light-independent protochlorophyllide reductase subunit N.